Consider the following 168-residue polypeptide: GTP-dependent dephospho-CoA kinase (168 aa).

Asp49, Val50, Val51, Asp68, Lys70, and Glu120 together coordinate GTP.

The protein belongs to the GTP-dependent DPCK family.

It carries out the reaction 3'-dephospho-CoA + GTP = GDP + CoA + H(+). It functions in the pathway cofactor biosynthesis; coenzyme A biosynthesis. Functionally, catalyzes the GTP-dependent phosphorylation of the 3'-hydroxyl group of dephosphocoenzyme A to form coenzyme A (CoA). The sequence is that of GTP-dependent dephospho-CoA kinase from Pyrobaculum calidifontis (strain DSM 21063 / JCM 11548 / VA1).